A 313-amino-acid polypeptide reads, in one-letter code: MMENFKHTTVLLDEAVNGLNIRPDGIYIDGTFGRGGHSRLILSQLGEEGRLLAIDRDPQAIAVAQAISDPRFSIIHGPFSALADYVAERELTGKIDGILLDLGVSSPQLDDAERGFSFMRDGPLDMRMDPTRGQSAAEWLQTAEEADIAWVLKTFGEERFAKRIARAIVERNREQPMTRTKELAEVVAAATPVKDKFKHPATRTFQAVRIWVNSELEEIEQALKSSLSVLAPGGRLSIISFHSLEDRIVKRFMREQSRGPQVPAGLPMTEAQLKKLGGRELRALGKLMPGEKEVAENPRARSSVLRIAERTNA.

S-adenosyl-L-methionine is bound by residues 35–37 (GGH), Asp-55, Phe-79, Asp-101, and Gln-108.

This sequence belongs to the methyltransferase superfamily. RsmH family.

It is found in the cytoplasm. The catalysed reaction is cytidine(1402) in 16S rRNA + S-adenosyl-L-methionine = N(4)-methylcytidine(1402) in 16S rRNA + S-adenosyl-L-homocysteine + H(+). Specifically methylates the N4 position of cytidine in position 1402 (C1402) of 16S rRNA. The sequence is that of Ribosomal RNA small subunit methyltransferase H from Salmonella paratyphi A (strain ATCC 9150 / SARB42).